The primary structure comprises 257 residues: uncharacterized protein (257 aa).

The helical transmembrane segment at isoleucine 6 to phenylalanine 26 threads the bilayer.

Belongs to the staphylococcal tandem lipoprotein family.

It is found in the cell membrane. This is an uncharacterized protein from Staphylococcus aureus (strain N315).